Consider the following 354-residue polypeptide: NADH-quinone oxidoreductase subunit H (354 aa).

8 helical membrane passes run 23–43, 91–111, 124–144, 162–182, 203–223, 250–270, 291–311, and 330–350; these read LVRA…LILW, YIIA…VIPF, LLYV…AGWA, ISYE…TGSL, ILSW…ISGV, GMAF…ISAL, IPGF…FIWL, and IFIP…VSPW.

The protein belongs to the complex I subunit 1 family. As to quaternary structure, NDH-1 is composed of 14 different subunits. Subunits NuoA, H, J, K, L, M, N constitute the membrane sector of the complex.

It is found in the cell inner membrane. It catalyses the reaction a quinone + NADH + 5 H(+)(in) = a quinol + NAD(+) + 4 H(+)(out). Functionally, NDH-1 shuttles electrons from NADH, via FMN and iron-sulfur (Fe-S) centers, to quinones in the respiratory chain. The immediate electron acceptor for the enzyme in this species is believed to be ubiquinone. Couples the redox reaction to proton translocation (for every two electrons transferred, four hydrogen ions are translocated across the cytoplasmic membrane), and thus conserves the redox energy in a proton gradient. This subunit may bind ubiquinone. This chain is NADH-quinone oxidoreductase subunit H, found in Ralstonia pickettii (strain 12J).